The sequence spans 165 residues: Transcription elongation factor A protein-like 1 (165 aa).

Disordered stretches follow at residues 1 to 66 and 89 to 124; these read MENS…LLPE and IPMEQPPCGIGKHKLEEGSFKERLARSRPQFRGDIH. A compositionally biased stretch (acidic residues) spans 33–60; sequence CSEDDQSSEDLSSEEQSSDEEFFPEELL. Residues 101–124 are compositionally biased toward basic and acidic residues; the sequence is HKLEEGSFKERLARSRPQFRGDIH.

This sequence belongs to the TFS-II family. TFA subfamily.

It localises to the nucleus. In terms of biological role, may be involved in transcriptional regulation. Modulates various viral and cellular promoters in a promoter context-dependent manner. Does not bind DNA directly. The protein is Transcription elongation factor A protein-like 1 of Rattus norvegicus (Rat).